The sequence spans 386 residues: Ovalbumin (386 aa).

G2 carries the N-acetylglycine modification. Positions 22 to 48 (HHANENIFYSPFTIISALAMVYLGAKD) form a signal peptide, not cleaved. Residue S69 is modified to Phosphoserine. A disulfide bridge connects residues C74 and C121. Residues N293 and N312 are each glycosylated (N-linked (GlcNAc...) asparagine). Phosphoserine is present on S345. A glycan (N-linked (GlcNAc...) asparagine) is linked at N372.

The protein belongs to the serpin family. Ov-serpin subfamily. In terms of processing, the signal sequence is not cleaved. The functional signal for membrane translocation of ovalbumin becomes accessible when the nascent chain is 50 to 60 residues long. The hydrophobic sequence which lies between residues 27 and 43 folds back on the preceding residues to form an amphipathic hairpin structure which is the signal element recognized by the membrane. As to expression, major protein of egg white.

It localises to the secreted. Storage protein of egg white. Lack protease inhibitory activity. This is Ovalbumin (SERPINB14) from Meleagris gallopavo (Wild turkey).